Consider the following 885-residue polypeptide: DNA replication licensing factor REC (885 aa).

The disordered stretch occupies residues 36-76 (RVIPAGGNRQPNQGEPGAPDAPSVPPATRQPRGWSRTAGKR). A C4-type zinc finger spans residues 281 to 308 (CSRCQMEIAMRQRGTFQPRPYQCKRSEC). One can recognise an MCM domain in the interval 430 to 627 (SFKLLVQSIA…ERDMSLTAHV (198 aa)). 473–480 (GDPGIGKT) is a binding site for ATP. The segment covering 796–805 (SLKEGSSRQG) has biased composition (polar residues). The disordered stretch occupies residues 796 to 818 (SLKEGSSRQGTRGGGGAGGGAGK). Positions 806–817 (TRGGGGAGGGAG) are enriched in gly residues.

Belongs to the MCM family.

It is found in the nucleus. Required for meiotic DNA recombination in females. Probably not involved in DNA repair and recombination in somatic cells. This is DNA replication licensing factor REC (rec) from Drosophila melanogaster (Fruit fly).